Consider the following 120-residue polypeptide: Aspartate 1-decarboxylase (120 aa).

Ser25 serves as the catalytic Schiff-base intermediate with substrate; via pyruvic acid. Ser25 carries the post-translational modification Pyruvic acid (Ser). Thr57 is a substrate binding site. Tyr58 (proton donor) is an active-site residue. 73 to 75 provides a ligand contact to substrate; it reads GAA.

It belongs to the PanD family. Heterooctamer of four alpha and four beta subunits. Pyruvate serves as cofactor. Is synthesized initially as an inactive proenzyme, which is activated by self-cleavage at a specific serine bond to produce a beta-subunit with a hydroxyl group at its C-terminus and an alpha-subunit with a pyruvoyl group at its N-terminus.

It is found in the cytoplasm. It carries out the reaction L-aspartate + H(+) = beta-alanine + CO2. Its pathway is cofactor biosynthesis; (R)-pantothenate biosynthesis; beta-alanine from L-aspartate: step 1/1. Catalyzes the pyruvoyl-dependent decarboxylation of aspartate to produce beta-alanine. The protein is Aspartate 1-decarboxylase of Methylibium petroleiphilum (strain ATCC BAA-1232 / LMG 22953 / PM1).